Here is a 306-residue protein sequence, read N- to C-terminus: GTP cyclohydrolase FolE2 (306 aa).

Belongs to the GTP cyclohydrolase IV family.

The enzyme catalyses GTP + H2O = 7,8-dihydroneopterin 3'-triphosphate + formate + H(+). The protein operates within cofactor biosynthesis; 7,8-dihydroneopterin triphosphate biosynthesis; 7,8-dihydroneopterin triphosphate from GTP: step 1/1. Converts GTP to 7,8-dihydroneopterin triphosphate. The polypeptide is GTP cyclohydrolase FolE2 (Pseudoalteromonas atlantica (strain T6c / ATCC BAA-1087)).